Here is a 362-residue protein sequence, read N- to C-terminus: Putative glutamate--cysteine ligase 2-1 (362 aa).

It belongs to the glutamate--cysteine ligase type 2 family. YbdK subfamily.

It catalyses the reaction L-cysteine + L-glutamate + ATP = gamma-L-glutamyl-L-cysteine + ADP + phosphate + H(+). In terms of biological role, ATP-dependent carboxylate-amine ligase which exhibits weak glutamate--cysteine ligase activity. This Streptomyces avermitilis (strain ATCC 31267 / DSM 46492 / JCM 5070 / NBRC 14893 / NCIMB 12804 / NRRL 8165 / MA-4680) protein is Putative glutamate--cysteine ligase 2-1.